The following is a 274-amino-acid chain: Undecaprenyl-diphosphatase (274 aa).

Transmembrane regions (helical) follow at residues 4–24 (PLFV…FLPI), 41–61 (DATS…AVCW), 83–103 (FVGL…MFHS), 108–128 (LLFN…LILW), 184–204 (AAEF…VYDL), 218–238 (VFAI…KAFI), and 246–266 (FIAF…TWQL).

It belongs to the UppP family.

The protein resides in the cell inner membrane. It carries out the reaction di-trans,octa-cis-undecaprenyl diphosphate + H2O = di-trans,octa-cis-undecaprenyl phosphate + phosphate + H(+). Catalyzes the dephosphorylation of undecaprenyl diphosphate (UPP). Confers resistance to bacitracin. This Aromatoleum aromaticum (strain DSM 19018 / LMG 30748 / EbN1) (Azoarcus sp. (strain EbN1)) protein is Undecaprenyl-diphosphatase.